The chain runs to 164 residues: Protein SprT (164 aa).

The SprT-like domain occupies 14-156 (QLAESFFKRP…LCRRCRNTLV (143 aa)). A Zn(2+)-binding site is contributed by His-69. Glu-70 is an active-site residue. A Zn(2+)-binding site is contributed by His-73.

This sequence belongs to the SprT family. Requires Zn(2+) as cofactor.

Its subcellular location is the cytoplasm. The sequence is that of Protein SprT from Pseudomonas fluorescens (strain Pf0-1).